The chain runs to 450 residues: Na(+)/H(+) antiporter NhaA 1 (450 aa).

11 consecutive transmembrane segments (helical) span residues 35–55 (SSLF…SDYA), 79–99 (LKHI…GLEI), 117–137 (LIIC…GFNW), 143–163 (IGWG…LTMV), 173–193 (AFIV…IAIF), 198–218 (ISLM…VANY), 224–244 (PLFY…SGVH), 320–340 (LPVV…VVIN), 356–376 (IISG…WFAL), 392–412 (VIGA…IATL), and 423–443 (VAKT…LLYL).

It belongs to the NhaA Na(+)/H(+) (TC 2.A.33) antiporter family.

It is found in the cell inner membrane. The catalysed reaction is Na(+)(in) + 2 H(+)(out) = Na(+)(out) + 2 H(+)(in). Its function is as follows. Na(+)/H(+) antiporter that extrudes sodium in exchange for external protons. The protein is Na(+)/H(+) antiporter NhaA 1 of Shewanella denitrificans (strain OS217 / ATCC BAA-1090 / DSM 15013).